The chain runs to 810 residues: Protein kinase C-binding protein NELL1 (810 aa).

The signal sequence occupies residues 1 to 21 (MPMDLILVVWFCVCTARTVVG). N-linked (GlcNAc...) asparagine glycans are attached at residues N40, N53, N83, N224, N294, and N372. The Laminin G-like domain occupies 64–227 (EREIHAAPHV…TQCPNLNHTC (164 aa)). A VWFC 1 domain is found at 271–332 (KTCQVSGLLY…IAGQCCKVCR (62 aa)). 3 disulfide bridges follow: C395-C407, C401-C416, and C418-C432. Ca(2+)-binding residues include D434, I435, and E437. Positions 434 to 475 (DIDECAAKMHYCHANTVCVNLPGLYRCDCVPGYIRVDDFSCT) constitute an EGF-like 1; calcium-binding domain. 15 cysteine pairs are disulfide-bonded: C438-C451, C445-C460, C462-C474, C480-C493, C487-C502, C504-C515, C519-C529, C523-C535, C537-C546, C553-C566, C560-C575, C577-C594, C600-C613, C607-C622, and C624-C630. Ca(2+)-binding residues include N453, L454, and L457. The EGF-like 2; calcium-binding domain maps to 476–516 (EHDECGSGQHNCDENAICTNTVQGHSCTCKPGYVGNGTICR). N511 carries N-linked (GlcNAc...) asparagine glycosylation. One can recognise an EGF-like 3 domain in the interval 517–547 (AFCEEGCRYGGTCVAPNKCVCPSGFTGSHCE). Residues 549–587 (DIDECSEGIIECHNHSRCVNLPGWYHCECRSGFHDDGTY) enclose the EGF-like 4; calcium-binding domain. Residue N562 is glycosylated (N-linked (GlcNAc...) asparagine). The 36-residue stretch at 596 to 631 (DIDECALRTHTCWNDSACINLAGGFDCLCPSGPSCS) folds into the EGF-like 5; calcium-binding domain. The N-linked (GlcNAc...) asparagine glycan is linked to N609. The region spanning 692–750 (SQCLDQNGHKLYRSGDNWTHSCQQCRCLEGEVDCWPLTCPNLSCEYTAILEGECCPRCV) is the VWFC 2 domain. N-linked (GlcNAc...) asparagine glycosylation is found at N708, N732, and N758.

As to quaternary structure, homotrimer. Binds to PKC beta-1. Interacts with ATRAID; the interaction promotes osteoblast cell differentiation and mineralization. Interacts with ROBO3.

The protein localises to the cytoplasm. The protein resides in the nucleus envelope. It is found in the secreted. In terms of biological role, plays a role in the control of cell growth and differentiation. Promotes osteoblast cell differentiation and terminal mineralization. The protein is Protein kinase C-binding protein NELL1 (NELL1) of Homo sapiens (Human).